The primary structure comprises 288 residues: Dichloromethane dehalogenase (288 aa).

Positions 12–94 constitute a GST N-terminal domain; that stretch reads KTLRLLYHPA…YVNEKFDGAG (83 aa). The 153-residue stretch at 100–252 folds into the GST C-terminal domain; the sequence is GTQERAQINQ…ASMFKRKTAV (153 aa).

It belongs to the GST superfamily. As to quaternary structure, homohexamer.

Its subcellular location is the cytoplasm. The catalysed reaction is dichloromethane + H2O = formaldehyde + 2 chloride + 2 H(+). The protein operates within xenobiotic degradation; dichloromethane degradation. The sequence is that of Dichloromethane dehalogenase (dcmA) from Methylorubrum extorquens (strain DSM 6343 / CIP 106787 / DM4) (Methylobacterium extorquens).